Reading from the N-terminus, the 547-residue chain is Putative cysteine ligase BshC (547 aa).

A coiled-coil region spans residues 462-484; sequence NLAEENLDRVIAQARFLRQKVEH.

The protein belongs to the BshC family.

Involved in bacillithiol (BSH) biosynthesis. May catalyze the last step of the pathway, the addition of cysteine to glucosamine malate (GlcN-Mal) to generate BSH. In Heliobacterium modesticaldum (strain ATCC 51547 / Ice1), this protein is Putative cysteine ligase BshC.